A 433-amino-acid chain; its full sequence is 3-phosphoshikimate 1-carboxyvinyltransferase (433 aa).

Lys-21, Ser-22, and Arg-26 together coordinate 3-phosphoshikimate. Lys-21 is a phosphoenolpyruvate binding site. The phosphoenolpyruvate site is built by Gly-96 and Arg-124. 3-phosphoshikimate contacts are provided by Ser-167, Ser-168, Gln-169, Ser-195, Asp-310, and Lys-337. Gln-169 serves as a coordination point for phosphoenolpyruvate. The active-site Proton acceptor is the Asp-310. The phosphoenolpyruvate site is built by Arg-341, Arg-384, and Lys-410.

It belongs to the EPSP synthase family. As to quaternary structure, monomer.

Its subcellular location is the cytoplasm. It carries out the reaction 3-phosphoshikimate + phosphoenolpyruvate = 5-O-(1-carboxyvinyl)-3-phosphoshikimate + phosphate. The protein operates within metabolic intermediate biosynthesis; chorismate biosynthesis; chorismate from D-erythrose 4-phosphate and phosphoenolpyruvate: step 6/7. Its function is as follows. Catalyzes the transfer of the enolpyruvyl moiety of phosphoenolpyruvate (PEP) to the 5-hydroxyl of shikimate-3-phosphate (S3P) to produce enolpyruvyl shikimate-3-phosphate and inorganic phosphate. This Clostridium botulinum (strain Alaska E43 / Type E3) protein is 3-phosphoshikimate 1-carboxyvinyltransferase.